A 517-amino-acid chain; its full sequence is N-acetylglucosamine-1-phosphodiester alpha-N-acetylglucosaminidase (517 aa).

Positions 1–25 (MAAPRGPGLFLIPALLGLLGVAWCS) are cleaved as a signal peptide. Residues 26 to 49 (LSFGVSRDDDLLLPYPLARRRPSR) constitute a propeptide, removed in mature form. The interval 49 to 75 (RDCARVRSGSPEQESWPPPPTNPGASH) is disordered. The Lumenal segment spans residues 50 to 453 (DCARVRSGSP…ASFTRTTWLA (404 aa)). 5 disulfides stabilise this stretch: cysteine 116–cysteine 149, cysteine 133–cysteine 324, cysteine 308–cysteine 315, cysteine 363–cysteine 374, and cysteine 381–cysteine 390. N-linked (GlcNAc...) asparagine glycosylation is found at asparagine 215 and asparagine 297. Positions 359–391 (SELDCGPSNCSQHGLCTETGCHCDAGWTGSNCS) constitute an EGF-like domain. 3 N-linked (GlcNAc...) asparagine glycosylation sites follow: asparagine 367, asparagine 389, and asparagine 421. Residues 454–474 (LTLTLIFLLLISTGVNVSLFL) traverse the membrane as a helical segment. The Cytoplasmic portion of the chain corresponds to 475–517 (GSRAERNRHLDGDYVYHPLQEVNGEALTAEKEHMEETSNPFKD). Residues 488-491 (YVYH) carry the Tyrosine-based internalization motif motif. Positions 488-495 (YVYHPLQE) are mediates the interaction with AP4M1. An NPF internalization motif motif is present at residues 511–515 (TSNPF).

Homotetramer arranged as two disulfide-linked homodimers. Interacts with AP4M1. In terms of processing, the precursor is cleaved and activated in the trans-Golgi network by a furin endopeptidase.

Its subcellular location is the golgi apparatus. The protein localises to the golgi stack membrane. The protein resides in the trans-Golgi network. It carries out the reaction N(4)-[6-(N-acetyl-alpha-D-glucosaminyl-1-phospho)-alpha-D-mannosyl-(1-&gt;2)-alpha-D-mannosyl-(glycan)]-L-asparaginyl-[protein] + H2O = N(4)-[6-phospho-alpha-D-mannosyl-(1-&gt;2)-alpha-D-mannosyl-(glycan)]-L-asparaginyl-[protein] + N-acetyl-D-glucosamine + H(+). It functions in the pathway protein modification; protein glycosylation. Catalyzes the second step in the formation of the mannose 6-phosphate targeting signal on lysosomal enzyme oligosaccharides by removing GlcNAc residues from GlcNAc-alpha-P-mannose moieties, which are formed in the first step. Also hydrolyzes UDP-GlcNAc, a sugar donor for Golgi N-acetylglucosaminyltransferases. In Mus musculus (Mouse), this protein is N-acetylglucosamine-1-phosphodiester alpha-N-acetylglucosaminidase (Nagpa).